A 745-amino-acid polypeptide reads, in one-letter code: Double-stranded RNA-specific editase B2 (745 aa).

Disordered regions lie at residues Met1–Lys35 and Ser50–Glu104. Residues Cys20 to Asp34 show a composition bias toward basic residues. The segment at Lys23–Lys35 is R-domain (ssRNA-binding). 2 consecutive DRBM domains span residues Thr125–Gln191 and Asn283–Asp347. The 328-residue stretch at Val414–Phe741 folds into the A to I editase domain. His438 contacts Zn(2+). Glu440 (proton donor) is an active-site residue. 2 residues coordinate Zn(2+): Cys496 and Cys561.

Brain specific.

It localises to the nucleus. Functionally, lacks editing activity. It prevents the binding of other ADAR enzymes to targets in vitro, and decreases the efficiency of these enzymes. Capable of binding to dsRNA but also to ssRNA. The chain is Double-stranded RNA-specific editase B2 (Adarb2) from Mus musculus (Mouse).